The sequence spans 207 residues: MPMRKRHFYRLLPLASLLLAACTIPVSKGPATSPTSPQWRQHEQQLQQLGQFETRGAFAYLSDKQKVYARFFWQQTSPERYRLLLTNPLGSTELELVVQPGVTQLTDNQGKRYVSDDPQEMIQKLTGMSIPLESLRQWILGLPGDTSDFTLDDKYRLKKLTYQQNGVTWVVDYQEYNTQVTPSLPSRLELNQDGQRIKLKMDSWTIK.

Residues 1–21 (MPMRKRHFYRLLPLASLLLAA) form the signal peptide. Cysteine 22 is lipidated: N-palmitoyl cysteine. Residue cysteine 22 is the site of S-diacylglycerol cysteine attachment.

Belongs to the LolB family. As to quaternary structure, monomer.

It is found in the cell outer membrane. In terms of biological role, plays a critical role in the incorporation of lipoproteins in the outer membrane after they are released by the LolA protein. In Yersinia pestis bv. Antiqua (strain Antiqua), this protein is Outer-membrane lipoprotein LolB.